The primary structure comprises 215 residues: Large ribosomal subunit protein uL16 (215 aa).

Belongs to the universal ribosomal protein uL16 family. In terms of assembly, component of the large ribosomal subunit.

It is found in the cytoplasm. Functionally, component of the large ribosomal subunit. Plays a role in the formation of actively translating ribosomes. Plays a role in the embryonic brain development. This is Large ribosomal subunit protein uL16 from Danio rerio (Zebrafish).